A 143-amino-acid chain; its full sequence is UPF0047 protein MTH_771 (143 aa).

This sequence belongs to the UPF0047 family.

The protein is UPF0047 protein MTH_771 of Methanothermobacter thermautotrophicus (strain ATCC 29096 / DSM 1053 / JCM 10044 / NBRC 100330 / Delta H) (Methanobacterium thermoautotrophicum).